The chain runs to 623 residues: Dictomallein-5 (623 aa).

An N-terminal signal peptide occupies residues 1–21 (MKIFIIKIILVLFNYVLLSYS). One can recognise a Peptidase M66 domain in the interval 174–435 (PNVGQDYTLK…QNYFKNSIYY (262 aa)). Zn(2+) is bound at residue histidine 327. The active site involves glutamate 328. The Zn(2+) site is built by histidine 331 and histidine 337.

It belongs to the dictomallein family. Requires Zn(2+) as cofactor.

The protein localises to the secreted. This Dictyostelium discoideum (Social amoeba) protein is Dictomallein-5 (dtmlE).